We begin with the raw amino-acid sequence, 343 residues long: MGEYIMEKNTIILGIETSCDETAVAVVKNGTEIIANVVASQIESHKRFGGVVPEIASRHHVEEITVVLEEALKEANITFDDIDAIAVTEGPGLVGALLIGVNAAKAVAFAHDIPLVGVHHIAGHIYANRLVKEVQFPLLSLVVSGGHTELVYMKEHGSFEVIGETRDDAAGEAYDKVARTLSMPYPGGPHIDRLAHEGKPTIDLPRAWLEPDSYDFSFSGLKSAVINTVHNAKQRGIEIAPEDLAASFQESVIDVLVTKASRAADAYNVKQVLLAGGVAANKGLRARLEAEFAQKENVELIIPPLSLCTDNAAMIAAAGTIAYEQGKRATLALNANPGLDIES.

The Fe cation site is built by histidine 120 and histidine 124. Substrate-binding positions include valine 142–glycine 146, aspartate 175, glycine 188, aspartate 192, and asparagine 281. Aspartate 310 is a binding site for Fe cation.

This sequence belongs to the KAE1 / TsaD family. It depends on Fe(2+) as a cofactor.

It is found in the cytoplasm. It carries out the reaction L-threonylcarbamoyladenylate + adenosine(37) in tRNA = N(6)-L-threonylcarbamoyladenosine(37) in tRNA + AMP + H(+). Required for the formation of a threonylcarbamoyl group on adenosine at position 37 (t(6)A37) in tRNAs that read codons beginning with adenine. Is involved in the transfer of the threonylcarbamoyl moiety of threonylcarbamoyl-AMP (TC-AMP) to the N6 group of A37, together with TsaE and TsaB. TsaD likely plays a direct catalytic role in this reaction. The sequence is that of tRNA N6-adenosine threonylcarbamoyltransferase from Bacillus thuringiensis subsp. konkukian (strain 97-27).